The sequence spans 414 residues: MSGIIATYLIHDDSHNLEKKAEQIALGLTIGSWTHLPHLLQEQLKQHKGNVIHVEELAEHEHTNSYLRKKVKRGIIKIEYPLLNFSPDLPAILTTTFGKLSLDGEVKLIDLTFSDELKKHFPGPKFGIDGIRNLLQVHDRPLLMSIFKGMIGRNIGYLKTQLRDQAIGGVDIVKDDEILFENALTPLTKRIVSGKEVLQSVYETYGHKTLYAVNVTGRTFDLKENAKRAVQAGADILLFNVFAYGLDVLQSLAEDDEIPVPIMAHPAVSGAYSASKLYGISSPLLLGKLLRYAGADFSLFPSPYGSVALEKEEALAISKYLTEDDVFFKKSFSVPSAGIHPGFVPFIIRDFGKDVVINAGGGIHGHPNGAQGGGKAFRTAIDATLQNKPLHEVDDINLHSALQIWGNPSHEVKL.

The Proton acceptor role is filled by Lys-99. Substrate is bound by residues Lys-148, 174 to 177 (KDDE), His-265, Gly-338, and 360 to 361 (GG). Mg(2+) contacts are provided by Lys-174, Asp-176, and Glu-177. N6-carboxylysine is present on Lys-174.

This sequence belongs to the RuBisCO large chain family. Type IV subfamily. As to quaternary structure, homodimer. The cofactor is Mg(2+).

It carries out the reaction 5-methylsulfanyl-2,3-dioxopentyl phosphate = 2-hydroxy-5-methylsulfanyl-3-oxopent-1-enyl phosphate. The protein operates within amino-acid biosynthesis; L-methionine biosynthesis via salvage pathway; L-methionine from S-methyl-5-thio-alpha-D-ribose 1-phosphate: step 3/6. Its function is as follows. Catalyzes the enolization of 2,3-diketo-5-methylthiopentyl-1-phosphate (DK-MTP-1-P) into 2-hydroxy-3-keto-5-methylthiopentenyl-1-phosphate (HK-MTPenyl-1-P). In Bacillus thuringiensis (strain Al Hakam), this protein is 2,3-diketo-5-methylthiopentyl-1-phosphate enolase.